A 179-amino-acid polypeptide reads, in one-letter code: Cellular nucleic acid-binding protein homolog (179 aa).

7 consecutive CCHC-type zinc fingers follow at residues 17–34 (PRCYNCGENGHQARECTK), 36–53 (SICYNCNQTGHKASECTE), 58–75 (KTCYACGTAGHLVRDCPS), 83–100 (AECYKCGRVGHIARDCRT), 116–133 (MNCYACGSYGHQARDCTM), 135–152 (VKCYSCGKIGHRSFECQQ), and 157–174 (QLCYKCNQPGHIAVNCTS).

The protein to human CNBP and to retroviral nucleic acid binding proteins (NBP). Phosphorylated.

It is found in the nucleus. Functionally, acts in the sexual differentiation pathway. Is required for efficient conjugation. Double-stranded DNA-binding protein. The chain is Cellular nucleic acid-binding protein homolog (byr3) from Schizosaccharomyces pombe (strain 972 / ATCC 24843) (Fission yeast).